A 475-amino-acid polypeptide reads, in one-letter code: Splicing factor U2AF 65 kDa subunit (475 aa).

Positions 1–90 (MSDFDEFERQ…RHEKKKKVRK (90 aa)) are disordered. The residue at position 2 (Ser-2) is an N-acetylserine. Ser-2 bears the Phosphoserine mark. The segment at 2–93 (SDFDEFERQL…KKKKVRKYWD (92 aa)) is required for interaction with PRPF19. Over residues 7-22 (FERQLNENKQERDKEN) the composition is skewed to basic and acidic residues. The residue at position 15 (Lys-15) is a 5-hydroxylysine; by JMJD6; alternate. Residue Lys-15 forms a Glycyl lysine isopeptide (Lys-Gly) (interchain with G-Cter in SUMO2); alternate linkage. A necessary and sufficient to stimulate pre-mRNAs 3'-end cleavage in a CFIm complex-dependent manner region spans residues 17-47 (ERDKENRHRKRSHSRSRSRDRKRRSRSRDRR). Residues 23–46 (RHRKRSHSRSRSRDRKRRSRSRDR) are compositionally biased toward basic residues. Residues 47-56 (RNRDQRSASR) show a composition bias toward basic and acidic residues. Lys-70 is covalently cross-linked (Glycyl lysine isopeptide (Lys-Gly) (interchain with G-Cter in SUMO2); alternate). Lys-70 carries the post-translational modification N6-acetyllysine; alternate. Ser-79 carries the phosphoserine modification. Over residues 79–89 (SPRHEKKKKVR) the composition is skewed to basic residues. 3 RRM domains span residues 149–231 (RRLY…RPHD), 259–337 (HKLF…RASV), and 385–466 (LPEE…YCDP). Position 276 is a 5-hydroxylysine; by JMJD6 (Lys-276). Ser-294 is subject to Phosphoserine.

The protein belongs to the splicing factor SR family. As to quaternary structure, interacts with U2AF1L4. Heterodimer with U2AF1. Binds unphosphorylated SF1. Interacts with SCAF11 and SNW1. Interacts with ZRSR2/U2AF1-RS2. Interacts with RBM17. Interacts with PRPF19; the interaction is direct. Interacts with POLR2A (via the C-terminal domain); recruits PRPF19 and the Prp19 complex to the pre-mRNA. Interacts with KHDC4 (Isoform 2). Interacts with ZRSR2. Interacts with the SF3B complex composed of SF3B1, SF3B2, SF3B3, SF3B4, SF3B5, SF3B6 and PHF5A. Interacts (via N-terminus) with CPSF7 (via C-terminus); this interaction stimulates pre-mRNA 3'-end processing by promoting the recruitment of the CFIm complex to cleavage and polyadenylation signals. Interacts with ARGLU1; interaction may be involved in ARGLU1-mediated modulation of alternative splicing. In terms of processing, lysyl-hydroxylation at Lys-15 and Lys-276 affects the mRNA splicing activity of the protein, leading to regulate some, but not all, alternative splicing events.

The protein localises to the nucleus. Functionally, plays a role in pre-mRNA splicing and 3'-end processing. By recruiting PRPF19 and the PRP19C/Prp19 complex/NTC/Nineteen complex to the RNA polymerase II C-terminal domain (CTD), and thereby pre-mRNA, may couple transcription to splicing. Induces cardiac troponin-T (TNNT2) pre-mRNA exon inclusion in muscle. Regulates the TNNT2 exon 5 inclusion through competition with MBNL1. Binds preferentially to a single-stranded structure within the polypyrimidine tract of TNNT2 intron 4 during spliceosome assembly. Required for the export of mRNA out of the nucleus, even if the mRNA is encoded by an intron-less gene. Represses the splicing of MAPT/Tau exon 10. Positively regulates pre-mRNA 3'-end processing by recruiting the CFIm complex to cleavage and polyadenylation signals. The sequence is that of Splicing factor U2AF 65 kDa subunit (U2AF2) from Homo sapiens (Human).